A 267-amino-acid chain; its full sequence is 2-keto-3-deoxy-L-rhamnonate aldolase (267 aa).

The active-site Proton acceptor is the His49. Residue Gln151 participates in substrate binding. Glu153 is a binding site for Mg(2+). Substrate is bound by residues Ala178 and Asp179. Asp179 serves as a coordination point for Mg(2+).

It belongs to the HpcH/HpaI aldolase family. KDR aldolase subfamily. In terms of assembly, homohexamer. Mg(2+) is required as a cofactor.

The enzyme catalyses 2-dehydro-3-deoxy-L-rhamnonate = (S)-lactaldehyde + pyruvate. Functionally, catalyzes the reversible retro-aldol cleavage of 2-keto-3-deoxy-L-rhamnonate (KDR) to pyruvate and lactaldehyde. The polypeptide is 2-keto-3-deoxy-L-rhamnonate aldolase (Klebsiella pneumoniae subsp. pneumoniae (strain ATCC 700721 / MGH 78578)).